The sequence spans 133 residues: Large ribosomal subunit protein uL14 (133 aa).

Belongs to the universal ribosomal protein uL14 family. As to quaternary structure, part of the 50S ribosomal subunit. Forms a cluster with proteins L3 and L24e, part of which may contact the 16S rRNA in 2 intersubunit bridges.

Functionally, binds to 23S rRNA. Forms part of two intersubunit bridges in the 70S ribosome. The chain is Large ribosomal subunit protein uL14 from Nanoarchaeum equitans (strain Kin4-M).